We begin with the raw amino-acid sequence, 521 residues long: AAA ATPase forming ring-shaped complexes (521 aa).

Positions 4–44 (TEDLAALNDRLMAKNHALAEALNRAGKELTKAKSRLAQLAQ) form a coiled coil. 235–240 (GNGKTM) provides a ligand contact to ATP.

Belongs to the AAA ATPase family. As to quaternary structure, homohexamer. Assembles into a hexameric ring structure.

The chain is AAA ATPase forming ring-shaped complexes from Bifidobacterium longum subsp. infantis (strain ATCC 15697 / DSM 20088 / JCM 1222 / NCTC 11817 / S12).